The sequence spans 376 residues: Copper-containing nitrite reductase (376 aa).

The tat-type signal signal peptide spans 1–33; that stretch reads MAEQMQISRRTILAGAALAGALAPVLATTSAWG. Pyrrolidone carboxylic acid is present on Gln34. 2 Plastocyanin-like domains span residues 34–211 and 212–376; these read QGAV…YDKI and YYVG…PSGT. 7 residues coordinate Cu cation: His131, His136, His171, Cys172, His181, Met186, and His342.

This sequence belongs to the multicopper oxidase family. Homotrimer. Requires Cu(2+) as cofactor. The cofactor is Cu(+). FAD is required as a cofactor. In terms of processing, predicted to be exported by the Tat system. The position of the signal peptide cleavage has been experimentally proven.

The protein localises to the periplasm. It catalyses the reaction nitric oxide + Fe(III)-[cytochrome c] + H2O = Fe(II)-[cytochrome c] + nitrite + 2 H(+). It participates in nitrogen metabolism; nitrate reduction (denitrification); dinitrogen from nitrate: step 2/4. In Alcaligenes faecalis, this protein is Copper-containing nitrite reductase (nirK).